A 587-amino-acid polypeptide reads, in one-letter code: Formate--tetrahydrofolate ligase (587 aa).

73 to 80 (TPLGEGKS) contributes to the ATP binding site.

It belongs to the formate--tetrahydrofolate ligase family.

It catalyses the reaction (6S)-5,6,7,8-tetrahydrofolate + formate + ATP = (6R)-10-formyltetrahydrofolate + ADP + phosphate. Its pathway is one-carbon metabolism; tetrahydrofolate interconversion. In Desulfosudis oleivorans (strain DSM 6200 / JCM 39069 / Hxd3) (Desulfococcus oleovorans), this protein is Formate--tetrahydrofolate ligase.